The chain runs to 771 residues: DnaJ homolog subfamily C member 16 (771 aa).

The signal sequence occupies residues 1–25 (MELKRLSISWQFLIVLVLILQSLSA). Residues 26–532 (LDFDPYRVLG…ESLLHSNWRE (507 aa)) are Cytoplasmic-facing. In terms of domain architecture, J spans 29–93 (DPYRVLGVSR…EKRTNYDHYG (65 aa)). The Thioredoxin domain occupies 116–244 (FYFDESFFHF…LRQFVESLLP (129 aa)). Residues 533–553 (MMPLLSLIFSALFILFGTVIV) traverse the membrane as a helical; Anchor for type IV membrane protein segment. Residues 554 to 771 (QAFSDSNEER…FYIPSWPELD (218 aa)) lie on the Extracellular side of the membrane. The interval 559 to 590 (SNEERESHPPDKEEVPEKAGKTEPSFTKESSS) is disordered. A compositionally biased stretch (basic and acidic residues) spans 560–579 (NEERESHPPDKEEVPEKAGK). N628 is a glycosylation site (N-linked (GlcNAc...) asparagine).

The protein localises to the endoplasmic reticulum membrane. Functionally, plays an important role in regulating the size of autophagosomes during the formation process. The polypeptide is DnaJ homolog subfamily C member 16 (Dnajc16) (Rattus norvegicus (Rat)).